A 304-amino-acid chain; its full sequence is Oxygen-dependent coproporphyrinogen-III oxidase (304 aa).

Residue S94 participates in substrate binding. 2 residues coordinate a divalent metal cation: H98 and H108. H108 acts as the Proton donor in catalysis. 110 to 112 (NVR) serves as a coordination point for substrate. A divalent metal cation contacts are provided by H147 and H177. The tract at residues 242-277 (YVEFNLVYDRGTLFGLQTGGRTESILMSMPPLVRWE) is important for dimerization. 260 to 262 (GGR) lines the substrate pocket.

Belongs to the aerobic coproporphyrinogen-III oxidase family. As to quaternary structure, homodimer. A divalent metal cation serves as cofactor.

The protein localises to the cytoplasm. The catalysed reaction is coproporphyrinogen III + O2 + 2 H(+) = protoporphyrinogen IX + 2 CO2 + 2 H2O. The protein operates within porphyrin-containing compound metabolism; protoporphyrin-IX biosynthesis; protoporphyrinogen-IX from coproporphyrinogen-III (O2 route): step 1/1. In terms of biological role, involved in the heme biosynthesis. Catalyzes the aerobic oxidative decarboxylation of propionate groups of rings A and B of coproporphyrinogen-III to yield the vinyl groups in protoporphyrinogen-IX. This Shewanella piezotolerans (strain WP3 / JCM 13877) protein is Oxygen-dependent coproporphyrinogen-III oxidase.